The chain runs to 806 residues: MGIQGLLQFIKDASEPMHVKKYRGQTVAVDTYCWLHKGAFSCAEKLAKGEPTDQYVSYCMKFVDMLLSFGVKPILVFDGRNLPSKQEVEKSRRERRQANLQKGKQLLREGKITEARECFTRSVNITPSMAHDVIRAARTRGVDCVVAPYEADAQLAFLNKSDIAQAVITEDSDLLAFGCKKVILKMDKQGNGLEIEQCHLGRCKSLGNIFTEEKFRYMCILSGCDYLQSLYGIGLGKACKLLRMANNPDILKVIKKMGQYLKMDISVPEEYIEGFTKANNTFLYQLVFDPLRRKVVPLNPYPDHINPAALSYAGTNVGDEKGLQMALGNLDINTMQRIDDFNPDAPQTQPPKAPRSSSWNDRCDKTATTQASIWSQNYEPGCTKSQSPTSPKRPPPTRGKERIVSVQSLKLPQRESQVKRPREDTSLSVDDLLEQYTAGVKRHCPETQPTTKPLTNDNKVSKENHCGSTSGPFRPRNRFATLLQWRNRSEEGTEEQGTCSRFFCHDESNIAETQEDSKQDSSQSVESQEKHVSQSGGDTSSLCEEPEREQDKDEPSSPPASPSCSSRPASVGLGVFSWSGTTKELNKSVSHPARDSTERQRSSSTPSGLSTLQQFHRNKARISWAGPGLSLSSSPVEGSEDAGNSPGSPPSQDSAYFSQSSSISASVENSLVTEDNSDKEKERDSVVSNSPSSSPLDRLKPAVNRTKVSGLSRKGACGQGKGGKIETSAPARASGLRRKPSGKKNVNNENSPGLQATISGLWGAFSFKKDSPKLSATKKGEPMSPVGENVVMETTQADKEIFIIAE.

The interval 1 to 99 is N-domain; sequence MGIQGLLQFI…KSRRERRQAN (99 aa). Mg(2+) contacts are provided by Asp-30, Asp-78, Glu-150, Asp-152, Asp-171, Asp-173, and Asp-225. The interval 138 to 229 is I-domain; it reads RTRGVDCVVA…ILSGCDYLQS (92 aa). Disordered regions lie at residues 337–426, 443–475, and 512–754; these read RIDD…EDTS, HCPETQPTTKPLTNDNKVSKENHCGSTSGPFRP, and ETQE…SPGL. Positions 355 to 378 are enriched in polar residues; sequence RSSSWNDRCDKTATTQASIWSQNY. The span at 412–425 shows a compositional bias: basic and acidic residues; the sequence is PQRESQVKRPREDT. 3 stretches are compositionally biased toward polar residues: residues 447–458, 533–542, and 578–589; these read TQPTTKPLTNDN, SQSGGDTSSL, and WSGTTKELNKSV. Residues 592–601 are compositionally biased toward basic and acidic residues; that stretch reads PARDSTERQR. The segment covering 602–615 has biased composition (polar residues); sequence SSSTPSGLSTLQQF. A compositionally biased stretch (low complexity) spans 651–670; it reads SQDSAYFSQSSSISASVENS. Positions 676 to 685 are enriched in basic and acidic residues; that stretch reads NSDKEKERDS. Positions 686-696 are enriched in low complexity; sequence VVSNSPSSSPL. Residues 744–754 show a composition bias toward polar residues; the sequence is KNVNNENSPGL.

This sequence belongs to the XPG/RAD2 endonuclease family. EXO1 subfamily. Mg(2+) serves as cofactor.

It localises to the nucleus. Functionally, 5'-&gt;3' double-stranded DNA exonuclease which may also contain a cryptic 3'-&gt;5' double-stranded DNA exonuclease activity. Also exhibits endonuclease activity against 5'-overhanging flap structures similar to those generated by displacement synthesis when DNA polymerase encounters the 5'-end of a downstream Okazaki fragment. Required for DNA mismatch repair (MMR). The sequence is that of Exonuclease 1 (exo1) from Danio rerio (Zebrafish).